A 335-amino-acid polypeptide reads, in one-letter code: Tryptophan--tRNA ligase (335 aa).

Residues 13 to 15 and 21 to 22 contribute to the ATP site; these read QPS and GN. Positions 14–22 match the 'HIGH' region motif; that stretch reads PSGELTIGN. D138 contributes to the L-tryptophan binding site. ATP contacts are provided by residues 150-152, I189, and 198-202; these read GKD and KMSKS. Residues 198 to 202 carry the 'KMSKS' region motif; that stretch reads KMSKS.

Belongs to the class-I aminoacyl-tRNA synthetase family. In terms of assembly, homodimer.

It is found in the cytoplasm. The catalysed reaction is tRNA(Trp) + L-tryptophan + ATP = L-tryptophyl-tRNA(Trp) + AMP + diphosphate + H(+). In terms of biological role, catalyzes the attachment of tryptophan to tRNA(Trp). The protein is Tryptophan--tRNA ligase of Clostridium acetobutylicum (strain ATCC 824 / DSM 792 / JCM 1419 / IAM 19013 / LMG 5710 / NBRC 13948 / NRRL B-527 / VKM B-1787 / 2291 / W).